A 184-amino-acid chain; its full sequence is UPF0398 protein BAA_1648 (184 aa).

It belongs to the UPF0398 family.

In Bacillus anthracis (strain A0248), this protein is UPF0398 protein BAA_1648.